We begin with the raw amino-acid sequence, 351 residues long: Lipoyl synthase, mitochondrial (351 aa).

Positions 84, 89, 95, 115, 119, 122, and 330 each coordinate [4Fe-4S] cluster. In terms of domain architecture, Radical SAM core spans 100-319 (DKSKATATIM…QKRAMDMGFL (220 aa)).

This sequence belongs to the radical SAM superfamily. Lipoyl synthase family. It depends on [4Fe-4S] cluster as a cofactor.

It localises to the mitochondrion. The catalysed reaction is [[Fe-S] cluster scaffold protein carrying a second [4Fe-4S](2+) cluster] + N(6)-octanoyl-L-lysyl-[protein] + 2 oxidized [2Fe-2S]-[ferredoxin] + 2 S-adenosyl-L-methionine + 4 H(+) = [[Fe-S] cluster scaffold protein] + N(6)-[(R)-dihydrolipoyl]-L-lysyl-[protein] + 4 Fe(3+) + 2 hydrogen sulfide + 2 5'-deoxyadenosine + 2 L-methionine + 2 reduced [2Fe-2S]-[ferredoxin]. It functions in the pathway protein modification; protein lipoylation via endogenous pathway; protein N(6)-(lipoyl)lysine from octanoyl-[acyl-carrier-protein]: step 2/2. Catalyzes the radical-mediated insertion of two sulfur atoms into the C-6 and C-8 positions of the octanoyl moiety bound to the lipoyl domains of lipoate-dependent enzymes, thereby converting the octanoylated domains into lipoylated derivatives. This is Lipoyl synthase, mitochondrial from Yarrowia lipolytica (strain CLIB 122 / E 150) (Yeast).